We begin with the raw amino-acid sequence, 422 residues long: Histidine--tRNA ligase (422 aa).

It belongs to the class-II aminoacyl-tRNA synthetase family. In terms of assembly, homodimer.

The protein localises to the cytoplasm. It carries out the reaction tRNA(His) + L-histidine + ATP = L-histidyl-tRNA(His) + AMP + diphosphate + H(+). The sequence is that of Histidine--tRNA ligase from Aliivibrio fischeri (strain ATCC 700601 / ES114) (Vibrio fischeri).